A 607-amino-acid chain; its full sequence is Probable Ufm1-specific protease 2 (607 aa).

Residues Cys-440, Asp-564, and His-566 contribute to the active site.

Belongs to the peptidase C78 family.

In terms of biological role, thiol protease which recognizes and hydrolyzes the peptide bond at the C-terminal Gly of UFM1, a ubiquitin-like modifier protein bound to a number of target proteins. Does not hydrolyze SUMO1 or ISG15 ubiquitin-like proteins. The chain is Probable Ufm1-specific protease 2 from Drosophila melanogaster (Fruit fly).